Reading from the N-terminus, the 127-residue chain is Tyrosine-protein phosphatase 2 (127 aa).

One can recognise a Tyrosine-protein phosphatase domain in the interval 1 to 127; the sequence is QGSKVIVMVT…PRDCEAPILV (127 aa). Residues 63 to 81 are compositionally biased toward acidic residues; sequence VYDNDDGTEQNDEQTEEEP. A disordered region spans residues 63-82; that stretch reads VYDNDDGTEQNDEQTEEEPE.

The protein belongs to the protein-tyrosine phosphatase family.

It carries out the reaction O-phospho-L-tyrosyl-[protein] + H2O = L-tyrosyl-[protein] + phosphate. This is Tyrosine-protein phosphatase 2 (STY-2) from Styela plicata (Wrinkled sea squirt).